Here is a 375-residue protein sequence, read N- to C-terminus: Probable sugar phosphate/phosphate translocator At3g17430 (375 aa).

The next 10 membrane-spanning stretches (helical) occupy residues 9-29, 43-63, 76-96, 106-126, 140-160, 163-183, 193-213, 229-249, 257-276, and 280-302; these read LVLTYIYLLIYIILSSGVILY, LPITLTMIHMGFAGFVAFLLI, FEIYATCVVPISAFFASSLWF, VAFIQMLKALMPVATFIMAVV, MLLVSVGVVISSYGEIHFNIV, VYQVTGIFAEALRLVLTQVLL, ITSLYYIAPCSFVFLALPWYV, WIFFSNALCALALNFSIFLVI, IRVAGVLKDWILIALSTVIF, and TITGLNITGYAIALCGVVMYNYI. The tract at residues 328–348 is disordered; it reads EKKSSDKFNPNDSVEIPRVGG.

It belongs to the TPT transporter family. TPT (TC 2.A.7.9) subfamily.

It localises to the membrane. The protein is Probable sugar phosphate/phosphate translocator At3g17430 of Arabidopsis thaliana (Mouse-ear cress).